The chain runs to 448 residues: UDP-N-acetylmuramoylalanine--D-glutamate ligase (448 aa).

116 to 122 (GSNAKST) serves as a coordination point for ATP.

It belongs to the MurCDEF family.

The protein localises to the cytoplasm. It carries out the reaction UDP-N-acetyl-alpha-D-muramoyl-L-alanine + D-glutamate + ATP = UDP-N-acetyl-alpha-D-muramoyl-L-alanyl-D-glutamate + ADP + phosphate + H(+). The protein operates within cell wall biogenesis; peptidoglycan biosynthesis. In terms of biological role, cell wall formation. Catalyzes the addition of glutamate to the nucleotide precursor UDP-N-acetylmuramoyl-L-alanine (UMA). This is UDP-N-acetylmuramoylalanine--D-glutamate ligase from Pseudomonas syringae pv. tomato (strain ATCC BAA-871 / DC3000).